The chain runs to 406 residues: Argininosuccinate synthase (406 aa).

Alanine 8–serine 16 is a binding site for ATP. Position 86 (tyrosine 86) interacts with L-citrulline. Residue glycine 116 participates in ATP binding. Residues threonine 118, asparagine 122, and aspartate 123 each coordinate L-aspartate. Asparagine 122 is a binding site for L-citrulline. Positions 126, 174, 183, 259, and 271 each coordinate L-citrulline.

This sequence belongs to the argininosuccinate synthase family. Type 1 subfamily. Homotetramer.

The protein localises to the cytoplasm. The enzyme catalyses L-citrulline + L-aspartate + ATP = 2-(N(omega)-L-arginino)succinate + AMP + diphosphate + H(+). Its pathway is amino-acid biosynthesis; L-arginine biosynthesis; L-arginine from L-ornithine and carbamoyl phosphate: step 2/3. This Dehalococcoides mccartyi (strain ATCC BAA-2100 / JCM 16839 / KCTC 5957 / BAV1) protein is Argininosuccinate synthase.